The following is a 379-amino-acid chain: 23S rRNA (uracil(747)-C(5))-methyltransferase RlmC (379 aa).

4 residues coordinate [4Fe-4S] cluster: cysteine 3, cysteine 11, cysteine 14, and cysteine 86. S-adenosyl-L-methionine contacts are provided by glutamine 211, phenylalanine 240, glutamate 262, and asparagine 310. Cysteine 337 functions as the Nucleophile in the catalytic mechanism.

This sequence belongs to the class I-like SAM-binding methyltransferase superfamily. RNA M5U methyltransferase family. RlmC subfamily.

The catalysed reaction is uridine(747) in 23S rRNA + S-adenosyl-L-methionine = 5-methyluridine(747) in 23S rRNA + S-adenosyl-L-homocysteine + H(+). Its function is as follows. Catalyzes the formation of 5-methyl-uridine at position 747 (m5U747) in 23S rRNA. The sequence is that of 23S rRNA (uracil(747)-C(5))-methyltransferase RlmC from Halothiobacillus neapolitanus (strain ATCC 23641 / c2) (Thiobacillus neapolitanus).